Consider the following 348-residue polypeptide: Peptidyl-Lys metalloendopeptidase (348 aa).

A signal peptide spans 1-18; that stretch reads MFSSVMVALVSLAVAVSA. Positions 19 to 181 are excised as a propeptide; sequence NPGLSLKVSG…RATPTLTRPV (163 aa). 2 cysteine pairs are disulfide-bonded: cysteine 186-cysteine 256 and cysteine 258-cysteine 278. The O-linked (Man) threonine; partial glycan is linked to threonine 223. A Zn(2+)-binding site is contributed by histidine 298. The active site involves glutamate 299. Residues histidine 302 and aspartate 311 each contribute to the Zn(2+) site.

Requires Zn(2+) as cofactor.

Its subcellular location is the secreted. It carries out the reaction Preferential cleavage in proteins: -Xaa-|-Lys- (in which Xaa may be Pro).. Inhibited by chelating agents such as EDTA and 1,10-phenanthroline. The protein is Peptidyl-Lys metalloendopeptidase (MEP) of Grifola frondosa (Maitake).